The primary structure comprises 523 residues: Glycerate kinase (523 aa).

Position 60 is a phosphoserine (S60). K200 carries the post-translational modification N6-acetyllysine.

Belongs to the glycerate kinase type-2 family.

It localises to the cytoplasm. The enzyme catalyses (R)-glycerate + ATP = (2R)-3-phosphoglycerate + ADP + H(+). This is Glycerate kinase (Glyctk) from Rattus norvegicus (Rat).